The primary structure comprises 395 residues: Small ribosomal subunit protein mS31 (395 aa).

The N-terminal 65 residues, 1 to 65, are a transit peptide targeting the mitochondrion; the sequence is MFPRVSTFLP…IQRYFGTNSV (65 aa). 2 disordered regions span residues 70–97 and 175–196; these read KDKQ…NTKK and SELL…DAKR. The span at 183 to 196 shows a compositional bias: basic and acidic residues; it reads QHEEESRAQRDAKR.

Belongs to the mitochondrion-specific ribosomal protein mS31 family. As to quaternary structure, component of the mitochondrial small ribosomal subunit (mt-SSU). Mature mammalian 55S mitochondrial ribosomes consist of a small (28S) and a large (39S) subunit. The 28S small subunit contains a 12S ribosomal RNA (12S mt-rRNA) and 30 different proteins. The 39S large subunit contains a 16S rRNA (16S mt-rRNA), a copy of mitochondrial valine transfer RNA (mt-tRNA(Val)), which plays an integral structural role, and 52 different proteins.

It is found in the mitochondrion. The protein is Small ribosomal subunit protein mS31 (MRPS31) of Homo sapiens (Human).